The primary structure comprises 259 residues: MLEARLEQASILKKVVDAIKDLVQDCNFDCNDSGIALQAMDNSHVALVSMMLKAEGFSPYRCDRNIALGVNLTSLTKVLRAAQNEDILTLKAEDAPDVLNLVFESSETDRISEYDLKLMDIDQEHLGIPETEYAATITMPSNEFKRITTDLMAMSESVTIEANKDGVKFSCQGDIGNGSVTLRQHTNVEKPNESIEIELSEPVSLTFSLKYLVNFCKASALSNTVKICLSNEVPLLVEYSLGGSSYLRFYLAPKIGDDE.

Residues 61–80 (RCDRNIALGVNLTSLTKVLR) mediate DNA binding. K164 participates in a covalent cross-link: Glycyl lysine isopeptide (Lys-Gly) (interchain with G-Cter in SUMO); alternate. Residue K164 forms a Glycyl lysine isopeptide (Lys-Gly) (interchain with G-Cter in ubiquitin); alternate linkage.

The protein belongs to the PCNA family. In terms of assembly, homotrimer. In terms of processing, monoubiquitinated on Lys-164 upon DNA damage, and then polyubiquitinated through 'Lys-63'-linkage.

The protein resides in the nucleus. This protein is an auxiliary protein of DNA polymerase delta and is involved in the control of eukaryotic DNA replication by increasing the polymerase's processibility during elongation of the leading strand. Involved in DNA repair. This Chaetomium thermophilum (strain DSM 1495 / CBS 144.50 / IMI 039719) (Thermochaetoides thermophila) protein is Proliferating cell nuclear antigen.